We begin with the raw amino-acid sequence, 257 residues long: 5'-nucleotidase SurE (257 aa).

A divalent metal cation is bound by residues D8, D9, S39, and N87. The interval 234-257 (VSPLTAPHPTTGHEGLAGLAEKYQ) is disordered.

This sequence belongs to the SurE nucleotidase family. A divalent metal cation serves as cofactor.

It is found in the cytoplasm. It carries out the reaction a ribonucleoside 5'-phosphate + H2O = a ribonucleoside + phosphate. In terms of biological role, nucleotidase that shows phosphatase activity on nucleoside 5'-monophosphates. This Natronomonas pharaonis (strain ATCC 35678 / DSM 2160 / CIP 103997 / JCM 8858 / NBRC 14720 / NCIMB 2260 / Gabara) (Halobacterium pharaonis) protein is 5'-nucleotidase SurE.